A 146-amino-acid polypeptide reads, in one-letter code: UPF0735 ACT domain-containing protein Cbei_1295 (146 aa).

The 76-residue stretch at 70 to 145 (TYNIIFKNEK…NVEKVEFIGM (76 aa)) folds into the ACT domain.

It belongs to the UPF0735 family.

This is UPF0735 ACT domain-containing protein Cbei_1295 from Clostridium beijerinckii (strain ATCC 51743 / NCIMB 8052) (Clostridium acetobutylicum).